A 332-amino-acid polypeptide reads, in one-letter code: 2,3-diketo-L-gulonate reductase (332 aa).

Catalysis depends on histidine 44, which acts as the Proton donor. Residues 168-174 (ITMVDMS), 224-225 (WK), and 304-306 (GHE) contribute to the NAD(+) site.

It belongs to the LDH2/MDH2 oxidoreductase family. DlgD subfamily. In terms of assembly, homodimer.

It localises to the cytoplasm. The enzyme catalyses 3-dehydro-L-gulonate + NAD(+) = 2,3-dioxo-L-gulonate + NADH + H(+). It carries out the reaction 3-dehydro-L-gulonate + NADP(+) = 2,3-dioxo-L-gulonate + NADPH + H(+). Its function is as follows. Catalyzes the reduction of 2,3-diketo-L-gulonate in the presence of NADH, to form 3-keto-L-gulonate. This Escherichia coli O127:H6 (strain E2348/69 / EPEC) protein is 2,3-diketo-L-gulonate reductase.